The primary structure comprises 157 residues: Class I hydrophobin rodA (157 aa).

A signal peptide spans 1-41; sequence MKFSIAAAVVAFAASVAALPPAHDSQFAGNGVGNKGNSNVK. A glycan (N-linked (GlcNAc...) asparagine) is linked at asparagine 47. Intrachain disulfides connect cysteine 57/cysteine 131, cysteine 65/cysteine 125, cysteine 66/cysteine 106, and cysteine 132/cysteine 150.

The protein belongs to the fungal hydrophobin family. In terms of assembly, self-assembles to form functional amyloid fibrils called rodlets. Self-assembly into fibrillar rodlets occurs spontaneously at hydrophobic:hydrophilic interfaces and the rodlets further associate laterally to form amphipathic monolayers.

The protein resides in the secreted. It localises to the spore wall. Functionally, aerial growth, conidiation, and dispersal of filamentous fungi in the environment rely upon a capability of their secreting small amphipathic proteins called hydrophobins (HPBs) with low sequence identity. Class I can self-assemble into an outermost layer of rodlet bundles on aerial cell surfaces, conferring cellular hydrophobicity that supports fungal growth, development and dispersal; whereas Class II form highly ordered films at water-air interfaces through intermolecular interactions but contribute nothing to the rodlet structure. RodA is a class I hydrophobin that contributes to surface hydrophobicity, which is important for processes such as association of hyphae in reproductive structures, dispersal of aerial spores and adhesion of pathogens to host structures. Important for the formation of hydrophobic rodlet layers of asexually-produced spores. Promotes also biofilm formation and may enhance lignocellulose utilization via promoting a compact substrate-enzyme-fungus structure. This is Class I hydrophobin rodA from Emericella nidulans (strain FGSC A4 / ATCC 38163 / CBS 112.46 / NRRL 194 / M139) (Aspergillus nidulans).